A 182-amino-acid chain; its full sequence is D-lyxose ketol-isomerase (182 aa).

Positions 74, 76, 87, and 142 each coordinate Mn(2+).

It belongs to the D-lyxose ketol-isomerase family. Homodimer. Mn(2+) serves as cofactor.

It carries out the reaction D-lyxose = D-xylulose. Sugar isomerase that catalyzes the reversible isomerization of D-lyxose to D-xylulose. Shows weak activity with D-mannose and L-ribose. In Cohnella laeviribosi, this protein is D-lyxose ketol-isomerase.